Reading from the N-terminus, the 102-residue chain is NADH-quinone oxidoreductase subunit K (102 aa).

Helical transmembrane passes span 5–25 (LSHF…GIIL), 30–50 (IIVV…NLVS), and 62–82 (VFSL…LAIL).

This sequence belongs to the complex I subunit 4L family. As to quaternary structure, NDH-1 is composed of 14 different subunits. Subunits NuoA, H, J, K, L, M, N constitute the membrane sector of the complex.

It localises to the cell inner membrane. The catalysed reaction is a quinone + NADH + 5 H(+)(in) = a quinol + NAD(+) + 4 H(+)(out). In terms of biological role, NDH-1 shuttles electrons from NADH, via FMN and iron-sulfur (Fe-S) centers, to quinones in the respiratory chain. The immediate electron acceptor for the enzyme in this species is believed to be ubiquinone. Couples the redox reaction to proton translocation (for every two electrons transferred, four hydrogen ions are translocated across the cytoplasmic membrane), and thus conserves the redox energy in a proton gradient. In Methylocella silvestris (strain DSM 15510 / CIP 108128 / LMG 27833 / NCIMB 13906 / BL2), this protein is NADH-quinone oxidoreductase subunit K.